The sequence spans 81 residues: Protein Vpu (81 aa).

The Extracellular segment spans residues 1 to 7 (MSILQIV). A helical transmembrane segment spans residues 8 to 28 (AIVAIIVALILAIVVWTIVYI). Topologically, residues 29-81 (EYKRLLRQRKIDWLIDRIRERAEDSGNESEGDTEELSTLVEMEPDNFRNDNDM) are cytoplasmic. Positions 50 to 81 (AEDSGNESEGDTEELSTLVEMEPDNFRNDNDM) are disordered. Residues Ser53 and Ser57 each carry the phosphoserine; by host CK2 modification. A compositionally biased stretch (acidic residues) spans 53–63 (SGNESEGDTEE).

The protein belongs to the HIV-1 VPU protein family. Homopentamer. Interacts with host CD4 and BRTC; these interactions induce proteasomal degradation of CD4. Interacts with host BST2; this interaction leads to the degradation of host BST2. Interacts with host FBXW11. Interacts with host AP1M1; this interaction plays a role in the mistrafficking and subsequent degradation of host BST2. Interacts with host RANBP2; this interaction allows Vpu to down-regulate host BLM sumoylation. In terms of processing, phosphorylated by host CK2. This phosphorylation is necessary for interaction with human BTRC and degradation of CD4.

It localises to the host membrane. Ion channel activity is inhibited by hexamethylene amiloride in vitro. Enhances virion budding by targeting host CD4 and Tetherin/BST2 to proteasome degradation. Degradation of CD4 prevents any unwanted premature interactions between viral Env and its host receptor CD4 in the endoplasmic reticulum. Degradation of antiretroviral protein Tetherin/BST2 is important for virion budding, as BST2 tethers new viral particles to the host cell membrane. Mechanistically, Vpu bridges either CD4 or BST2 to BTRC, a substrate recognition subunit of the Skp1/Cullin/F-box protein E3 ubiquitin ligase, induces their ubiquitination and subsequent proteasomal degradation. The alteration of the E3 ligase specificity by Vpu seems to promote the degradation of host IKBKB, leading to NF-kappa-B down-regulation and subsequent apoptosis. Acts as a viroporin that forms an oligomeric ion channel in membranes. Modulates the host DNA repair mechanisms to promote degradation of nuclear viral cDNA in cells that are already productively infected in order to suppress immune sensing and proviral hyper-integration (superinfection). Manipulates PML-NBs and modulates SUMOylation of host BLM protein thereby enhancing its DNA-end processing activity toward viral unintegrated linear DNA. Also inhibits RAD52-mediated homologous repair of viral cDNA, preventing the generation of dead-end circular forms of single copies of the long terminal repeat and permitting sustained nucleolytic attack. The chain is Protein Vpu from Human immunodeficiency virus type 1 (HIV-1).